The primary structure comprises 472 residues: Probable dipeptidase A (472 aa).

The active site involves Cys10.

It belongs to the peptidase C69 family.

It carries out the reaction an L-aminoacyl-L-amino acid + H2O = 2 an L-alpha-amino acid. In Streptococcus pyogenes serotype M1, this protein is Probable dipeptidase A (pepDA).